We begin with the raw amino-acid sequence, 501 residues long: Protein anon-37Cs (501 aa).

The protein localises to the cytoplasm. Has a non-vital function. The chain is Protein anon-37Cs (anon-37Cs) from Drosophila simulans (Fruit fly).